A 215-amino-acid chain; its full sequence is Small ribosomal subunit protein eS1 (215 aa).

A disordered region spans residues 195–215; sequence SGMQEPQKNEPAPGGEAIAQN.

The protein belongs to the eukaryotic ribosomal protein eS1 family.

This is Small ribosomal subunit protein eS1 from Thermoplasma acidophilum (strain ATCC 25905 / DSM 1728 / JCM 9062 / NBRC 15155 / AMRC-C165).